A 225-amino-acid polypeptide reads, in one-letter code: UPF0758 protein Shew185_0376 (225 aa).

In terms of domain architecture, MPN spans 102 to 224; it reads VLTNPDLTRD…IVSFAERGWI (123 aa). Zn(2+) contacts are provided by His-173, His-175, and Asp-186. The JAMM motif signature appears at 173-186; that stretch reads HNHPSGNAEPSQAD.

Belongs to the UPF0758 family.

The polypeptide is UPF0758 protein Shew185_0376 (Shewanella baltica (strain OS185)).